A 1485-amino-acid chain; its full sequence is ABC multidrug transporter I (1485 aa).

2 disordered regions span residues 1–57 (MDEK…EEFS) and 75–111 (KQISRASKPTGKTEDVERSDSPADSDEPWDLETALRG). The segment covering 8–24 (SESSNGSDVDSLSTASA) has biased composition (polar residues). Asn-12 carries N-linked (GlcNAc...) asparagine glycosylation. Residues 85–95 (GKTEDVERSDS) are compositionally biased toward basic and acidic residues. Asn-132, Asn-335, and Asn-451 each carry an N-linked (GlcNAc...) asparagine glycan. The region spanning 163 to 411 (MHMLGYGKKG…FESLGFKERP (249 aa)) is the ABC transporter 1 domain. 7 consecutive transmembrane segments (helical) span residues 522 to 542 (FAQTVSWITSTGVAIILGTVW), 556 to 576 (GGLLFISLLFNGFQAFSELVS), 600 to 620 (IAQILVDTTFAIARILVFSII), 623 to 643 (FMCGLVLDAGAFFTFILIIVL), 664 to 684 (YAMKFASVVITLFVLTSGYLI), 691 to 711 (EWLRWLYYINPFGLGFAALMV), and 774 to 794 (FGIMVALTVGFLTLNLYHGET). The 244-residue stretch at 846–1089 (FTWEDVCYDV…LLDYFRRNGA (244 aa)) folds into the ABC transporter 2 domain. 882-889 (GASGAGKT) provides a ligand contact to ATP. 5 helical membrane-spanning segments follow: residues 1184–1204 (YGFTRLFNHVVIALVTGLAFL), 1211–1231 (ASLQYRIFVIFNVTVLPAIIL), 1268–1288 (LPYSILCAVCFFLPLYYIPGF), 1299–1319 (FLMVLITELFSVTLGQMISAL), and 1325–1345 (IASQINPPIVIIFSLFCGVAI). N-linked (GlcNAc...) asparagine glycosylation is found at Asn-1396 and Asn-1418. The chain crosses the membrane as a helical span at residues 1449–1469 (LGIFLAFIGSNLIILFLAVSF).

It belongs to the ABC transporter superfamily. ABCG family. PDR (TC 3.A.1.205) subfamily.

The protein localises to the cell membrane. The enzyme catalyses fluconazole(in) + ATP + H2O = fluconazole(out) + ADP + phosphate + H(+). The efflux inhibitor FK506 does not impair the transport activity. ABC efflux transporter that confers resistance to fluconazole (FLC) but shows no resistance to other azoles. Is also able to transport rhodamine 6G (R-6G), a known substrate for many ABC transporters. The polypeptide is ABC multidrug transporter I (Aspergillus fumigatus (strain ATCC MYA-4609 / CBS 101355 / FGSC A1100 / Af293) (Neosartorya fumigata)).